A 396-amino-acid polypeptide reads, in one-letter code: Stearoyl-[acyl-carrier-protein] 9-desaturase, chloroplastic (396 aa).

A chloroplast-targeting transit peptide spans 1-33 (MALRITPVTLQSERYRSFSFPKKANLRSPKFAM). A34 is subject to Blocked amino end (Ala); partial. 6 residues coordinate Fe cation: E138, E176, H179, E229, E262, and H265.

The protein belongs to the fatty acid desaturase type 2 family. Homodimer. Fe(2+) serves as cofactor. Post-translationally, most of the N-terminus is blocked.

Its subcellular location is the plastid. The protein localises to the chloroplast. It carries out the reaction octadecanoyl-[ACP] + 2 reduced [2Fe-2S]-[ferredoxin] + O2 + 2 H(+) = (9Z)-octadecenoyl-[ACP] + 2 oxidized [2Fe-2S]-[ferredoxin] + 2 H2O. The protein operates within lipid metabolism; fatty acid metabolism. Its function is as follows. Converts stearoyl-ACP to oleoyl-ACP by introduction of a cis double bond between carbons 9 and 10 of the acyl chain. In Carthamus tinctorius (Safflower), this protein is Stearoyl-[acyl-carrier-protein] 9-desaturase, chloroplastic.